Consider the following 1025-residue polypeptide: MKFFALFIYRPVATILLSVAITLCGILGFRMLPVAPLPQVDFPVIMVSASLPGASPETMASSVATPLERSLGRIAGVSEMTSSSSLGSTRIILQFDFDRDINGAARDVQAAINAAQSLLPSGMPSRPTYRKANPSDAPIMILTLTSDTYSQGELYDFASTQLAPTISQIDGVGDVDVGGSSLPAVRVGLNPQALFNQGVSLDDVRTAISNANVRKPQGALEDGTHRWQIQTNDELKTAAEYQPLIIHYNNGGAVRLGDVATVTDSVQDVRNAGMTNAKPAILLMIRKLPEANIIQTVDSIRAKLPELQETIPAAIDLQIAQDRSPTIRASLEEVEQTLIISVALVILVVFLFLRSGRATIIPAVAVPVSLIGTFAAMYLCGFSLNNLSLMALTIATGFVVDDAIVVLENIARHLEAGMKPLQAALQGTREVGFTVLSMSLSLVAVFLPLLLMGGLPGRLLREFAVTLSVAIGISLLVSLTLTPMMCGWMLKASKPREQKRLRGFGRMLVALQQGYGKSLKWVLNHTRLVGMVLLGTIALNIWLYISIPKTFFPEQDTGVLMGGIQADQSISFQAMRGKLQDFMKIIRDDPAVDNVTGFTGGSRVNSGMMFITLKPRDERSETAQQIIDRLRVKLAKEPGANLFLMAVQDIRVGGRQSNASYQYTLLSDDLAALREWEPKIRKKLATLPELADVNSDQQDNGAEMNLVYDRDTMARLGIDVQAANSLLNNAFGQRQISTIYQPMNQYKVVMEVDPRYTQDISALEKMFVINNEGKAIPLSYFAKWQPANAPLSVNHQGLSAASTISFNLPTGKSLSDASAAIDRAMTQLGVPSTVRGSFAGTAQVFQETMNSQVILIIAAIATVYIVLGILYESYVHPLTILSTLPSAGVGALLALELFNAPFSLIALIGIMLLIGIVKKNAIMMVDFALEAQRHGNLTPQEAIFQACLLRFRPIMMTTLAALFGALPLVLSGGDGSELRQPLGITIVGGLVMSQLLTLYTTPVVYLFFDRLRLRFSRKSKQTVTE.

The next 12 membrane-spanning stretches (helical) occupy residues 3-23, 333-353, 360-380, 387-407, 431-451, 463-483, 528-548, 853-873, 875-895, 897-917, 953-973, and 984-1004; these read FFALFIYRPVATILLSVAITL, EVEQTLIISVALVILVVFLFL, IIPAVAVPVSLIGTFAAMYLC, LSLMALTIATGFVVDDAIVVL, VGFTVLSMSLSLVAVFLPLLL, FAVTLSVAIGISLLVSLTLTP, LVGMVLLGTIALNIWLYISIP, VILIIAAIATVYIVLGILYES, VHPLTILSTLPSAGVGALLAL, LFNAPFSLIALIGIMLLIGIV, PIMMTTLAALFGALPLVLSGG, and ITIVGGLVMSQLLTLYTTPVV.

It belongs to the resistance-nodulation-cell division (RND) (TC 2.A.6) family. MdtC subfamily. Part of a tripartite efflux system composed of MdtA, MdtB and MdtC. MdtC forms a heteromultimer with MdtB.

It is found in the cell inner membrane. The MdtABC tripartite complex confers resistance against novobiocin and deoxycholate. The protein is Multidrug resistance protein MdtC of Escherichia coli O157:H7 (strain EC4115 / EHEC).